Consider the following 184-residue polypeptide: NADH-quinone oxidoreductase subunit B (184 aa).

[4Fe-4S] cluster is bound by residues C37, C38, C103, and C132.

The protein belongs to the complex I 20 kDa subunit family. NDH-1 is composed of 14 different subunits. Subunits NuoB, C, D, E, F, and G constitute the peripheral sector of the complex. The cofactor is [4Fe-4S] cluster.

The protein localises to the cell membrane. It carries out the reaction a quinone + NADH + 5 H(+)(in) = a quinol + NAD(+) + 4 H(+)(out). Functionally, NDH-1 shuttles electrons from NADH, via FMN and iron-sulfur (Fe-S) centers, to quinones in the respiratory chain. The immediate electron acceptor for the enzyme in this species is believed to be a menaquinone. Couples the redox reaction to proton translocation (for every two electrons transferred, four hydrogen ions are translocated across the cytoplasmic membrane), and thus conserves the redox energy in a proton gradient. This Rhodococcus jostii (strain RHA1) protein is NADH-quinone oxidoreductase subunit B.